A 232-amino-acid chain; its full sequence is CD302 antigen (232 aa).

Positions 1–22 are cleaved as a signal peptide; it reads MPRAAPPALLLPLLGLAAAAAA. Topologically, residues 23-168 are extracellular; sequence DCPSSTWVQF…YEKKYLSDNR (146 aa). Residues 32–152 enclose the C-type lectin domain; it reads FQDSCYIFLQ…CEVSSVEGTL (121 aa). The N-linked (GlcNAc...) asparagine glycan is linked to N109. Residues C128 and C143 are joined by a disulfide bond. A helical membrane pass occupies residues 169–189; sequence ILISALVIASTVILTVLGAVV. The Cytoplasmic portion of the chain corresponds to 190–232; sequence WFLYKRSLDSGFTTVFSAAHQSPYNDDCVLVVAEENEYDIQFN.

It is found in the membrane. The protein localises to the cell projection. It localises to the filopodium. Its subcellular location is the cytoplasm. The protein resides in the cell cortex. It is found in the microvillus. Functionally, potential multifunctional C-type lectin receptor that may play roles in endocytosis and phagocytosis as well as in cell adhesion and migration. The protein is CD302 antigen of Bos taurus (Bovine).